A 633-amino-acid chain; its full sequence is MHGLLLAAAGLLSLPLHVLAHPQPSTNLAGRGVDLDAYRMADRSSYMSSDDMKLKQPAIASLSGGNYVDTATEVVKRMMPGMTFRMVDDHYVGESGISHVYFRQTMHGMDIDNADFNVNIGKDGKVLSVGHSFYTGPAPDKAPVEKRDFSDPMQAFHGACKALNLSINSDKATIQTMNEHEVMFMGTSGAMSDPQGKLCYMAKEDGTLALTWRVETDMGDNWLLSYVDAKETDKVHNVVDYVSHATYQVYKWPIPDPTEGKREIVENPWNLKTSPFTWISDGKTNYTTTRGNNAIAQANFDGGEDYLNNYRPDSKNLKFEYPYAPNMSPPKSYIDASVTQLFYSANMVHDLYYMLGFTEKAGNFQVNNHGQGGKGNDFVILNAQDGSGTNNANFATPPDGKPGRMRVYIWTKAKPSRGSSFEAGTVIHEYTHGLSNRLCGGPANAGCLNGMESGGMGEGWGDFFATAIRLKPNDNRNSNYVHGEWVNNSPKGNRLYPYSTNLQTNPLVYTSCNKYNEVHAIGTVWCSILYEVLWNLIDKHGKNDGPTPVFENGVPNDGKYLALKLVLDGMAIQPCKPTFVQARDAIIDADMNLTKGSNKCELWKAFAKRGLGVGAKYDPKNRTGSKAVPKECQ.

Positions 1–20 (MHGLLLAAAGLLSLPLHVLA) are cleaved as a signal peptide. The propeptide occupies 21–244 (HPQPSTNLAG…VHNVVDYVSH (224 aa)). An N-linked (GlcNAc...) asparagine glycan is attached at Asn285. His428 lines the Zn(2+) pocket. Residue Glu429 is part of the active site. His432 is a binding site for Zn(2+). 2 N-linked (GlcNAc...) asparagine glycosylation sites follow: Asn592 and Asn621.

It belongs to the peptidase M36 family. Zn(2+) is required as a cofactor.

It localises to the secreted. Its function is as follows. Secreted metalloproteinase probably acting as a virulence factor. The sequence is that of Probable extracellular metalloproteinase 5 (MEP5) from Trichophyton verrucosum (strain HKI 0517).